A 486-amino-acid polypeptide reads, in one-letter code: FAD-dependent oxidoreductase domain-containing protein 1 (486 aa).

The helical transmembrane segment at 62-82 (EHSDVVIVGGGVLGLSVAYWL) threads the bilayer.

As to quaternary structure, associates with components of the mitochondrial respiratory chain complex I. FAD is required as a cofactor.

It is found in the mitochondrion inner membrane. In terms of biological role, required for the assembly of the mitochondrial membrane respiratory chain NADH dehydrogenase (Complex I). Involved in mid-late stages of complex I assembly. This chain is FAD-dependent oxidoreductase domain-containing protein 1, found in Homo sapiens (Human).